We begin with the raw amino-acid sequence, 419 residues long: Gamma-glutamyl phosphate reductase (419 aa).

This sequence belongs to the gamma-glutamyl phosphate reductase family.

Its subcellular location is the cytoplasm. The enzyme catalyses L-glutamate 5-semialdehyde + phosphate + NADP(+) = L-glutamyl 5-phosphate + NADPH + H(+). It participates in amino-acid biosynthesis; L-proline biosynthesis; L-glutamate 5-semialdehyde from L-glutamate: step 2/2. Catalyzes the NADPH-dependent reduction of L-glutamate 5-phosphate into L-glutamate 5-semialdehyde and phosphate. The product spontaneously undergoes cyclization to form 1-pyrroline-5-carboxylate. In Syntrophomonas wolfei subsp. wolfei (strain DSM 2245B / Goettingen), this protein is Gamma-glutamyl phosphate reductase.